A 108-amino-acid polypeptide reads, in one-letter code: Cytochrome c (108 aa).

C19, C22, H23, and M85 together coordinate heme c.

This sequence belongs to the cytochrome c family. Binds 1 heme c group covalently per subunit.

The protein resides in the mitochondrion intermembrane space. Its function is as follows. Electron carrier protein. The oxidized form of the cytochrome c heme group can accept an electron from the heme group of the cytochrome c1 subunit of cytochrome reductase. Cytochrome c then transfers this electron to the cytochrome oxidase complex, the final protein carrier in the mitochondrial electron-transport chain. The protein is Cytochrome c of Cochliobolus lunatus (Filamentous fungus).